The primary structure comprises 267 residues: L-aspartate dehydrogenase (267 aa).

NAD(+) is bound by residues alanine 124 and asparagine 190. The active site involves histidine 220.

Belongs to the L-aspartate dehydrogenase family.

It carries out the reaction L-aspartate + NADP(+) + H2O = oxaloacetate + NH4(+) + NADPH + H(+). The catalysed reaction is L-aspartate + NAD(+) + H2O = oxaloacetate + NH4(+) + NADH + H(+). It participates in cofactor biosynthesis; NAD(+) biosynthesis; iminoaspartate from L-aspartate (dehydrogenase route): step 1/1. Functionally, specifically catalyzes the NAD or NADP-dependent dehydrogenation of L-aspartate to iminoaspartate. This is L-aspartate dehydrogenase from Ralstonia pickettii (strain 12J).